An 872-amino-acid chain; its full sequence is Metabotropic glutamate receptor 2 (872 aa).

A signal peptide spans 1–18 (MESLLRFLALLLLRGAVA). At 19–568 (EGPAKKVLTL…EYIRWGDAWA (550 aa)) the chain is on the extracellular side. Cys-50 and Cys-92 are joined by a disulfide. 5 residues coordinate L-glutamate: Arg-57, Arg-61, Ser-145, Ala-166, and Thr-168. N-linked (GlcNAc...) asparagine glycans are attached at residues Asn-203 and Asn-286. 7 disulfide bridges follow: Cys-234-Cys-518, Cys-355-Cys-362, Cys-400-Cys-407, Cys-500-Cys-519, Cys-504-Cys-522, Cys-525-Cys-537, and Cys-540-Cys-553. Asp-295 lines the L-glutamate pocket. An N-linked (GlcNAc...) asparagine glycan is attached at Asn-338. Lys-377 contacts L-glutamate. N-linked (GlcNAc...) asparagine glycosylation occurs at Asn-402. Asn-547 carries an N-linked (GlcNAc...) asparagine glycan. A helical transmembrane segment spans residues 569 to 589 (VGPVTIACLGALATLFVLGVF). At 590–604 (VRHNATPVVKASGRE) the chain is on the cytoplasmic side. The chain crosses the membrane as a helical span at residues 605–625 (LCYILLGGVFLCYCMTFIFIA). Topologically, residues 626–633 (KPSTAVCT) are extracellular. A disulfide bond links Cys-632 and Cys-721. The chain crosses the membrane as a helical span at residues 634-651 (LRRLGLGTAFSVCYSALL). Topologically, residues 652-679 (TKTNRIARIFGGAREGAQRPRFISPASQ) are cytoplasmic. The important for interaction with HTR2A stretch occupies residues 677–685 (ASQVAICLA). Residues 680 to 700 (VAICLALISGQLLIVAAWLVV) form a helical membrane-spanning segment. Residues 701 to 726 (EAPGIGKETAPERREVVTLRCNHRDA) are Extracellular-facing. The chain crosses the membrane as a helical span at residues 727-747 (SMLGSLAYNVLLIALCTLYAF). Topologically, residues 748-760 (KTRKCPENFNEAK) are cytoplasmic. A helical transmembrane segment spans residues 761 to 781 (FIGFTMYTTCIIWLAFLPIFY). Over 782–798 (VTSSDYRVQTTTMCVSV) the chain is Extracellular. Residues 799-819 (SLSGSVVLGCLFAPKLHIILF) form a helical membrane-spanning segment. The Cytoplasmic segment spans residues 820 to 872 (QPQKNVVSHRAPTSRFGSAAPRASANLGQGSGSQLVPTVCNGREVVDSTTSSL).

The protein belongs to the G-protein coupled receptor 3 family. Forms heterodimers with GRM3 or GRM4. Interacts with GNAI1. Interacts with TAMALIN. Interacts with HTR2A. In terms of tissue distribution, detected in neurons in brain cortex (at protein level).

It localises to the cell membrane. The protein localises to the synapse. The protein resides in the cell projection. It is found in the dendrite. Dimeric G protein-coupled receptor which is activated by the excitatory neurotransmitter L-glutamate. Plays critical roles in modulating synaptic transmission and neuronal excitability. Upon activation by glutamate, inhibits presynaptic calcium channels, reducing further glutamate release and dampening excitatory signaling. Mechanistically, ligand binding causes a conformation change that triggers signaling via guanine nucleotide-binding proteins (G proteins) and modulates the activity of down-stream effectors, such as adenylate cyclase. May mediate suppression of neurotransmission or may be involved in synaptogenesis or synaptic stabilization. This chain is Metabotropic glutamate receptor 2 (Grm2), found in Mus musculus (Mouse).